Here is a 361-residue protein sequence, read N- to C-terminus: Holliday junction branch migration complex subunit RuvB (361 aa).

The tract at residues 1-25 (MSIHTDDFGQGGFAQGGFPPDKAPD) is disordered. The interval 5-207 (TDDFGQGGFA…FGIVARLEFY (203 aa)) is large ATPase domain (RuvB-L). Residues L46, R47, G88, K91, T92, T93, 154–156 (EDY), R197, Y207, and R244 contribute to the ATP site. Position 92 (T92) interacts with Mg(2+). Residues 208-278 (TAEELARIVR…LADRALAMLD (71 aa)) form a small ATPAse domain (RuvB-S) region. Positions 281–361 (PQGFDIMDRK…GLPVPGDDAS (81 aa)) are head domain (RuvB-H). Residues R336 and R341 each contribute to the DNA site.

Belongs to the RuvB family. In terms of assembly, homohexamer. Forms an RuvA(8)-RuvB(12)-Holliday junction (HJ) complex. HJ DNA is sandwiched between 2 RuvA tetramers; dsDNA enters through RuvA and exits via RuvB. An RuvB hexamer assembles on each DNA strand where it exits the tetramer. Each RuvB hexamer is contacted by two RuvA subunits (via domain III) on 2 adjacent RuvB subunits; this complex drives branch migration. In the full resolvosome a probable DNA-RuvA(4)-RuvB(12)-RuvC(2) complex forms which resolves the HJ.

It localises to the cytoplasm. The enzyme catalyses ATP + H2O = ADP + phosphate + H(+). The RuvA-RuvB-RuvC complex processes Holliday junction (HJ) DNA during genetic recombination and DNA repair, while the RuvA-RuvB complex plays an important role in the rescue of blocked DNA replication forks via replication fork reversal (RFR). RuvA specifically binds to HJ cruciform DNA, conferring on it an open structure. The RuvB hexamer acts as an ATP-dependent pump, pulling dsDNA into and through the RuvAB complex. RuvB forms 2 homohexamers on either side of HJ DNA bound by 1 or 2 RuvA tetramers; 4 subunits per hexamer contact DNA at a time. Coordinated motions by a converter formed by DNA-disengaged RuvB subunits stimulates ATP hydrolysis and nucleotide exchange. Immobilization of the converter enables RuvB to convert the ATP-contained energy into a lever motion, pulling 2 nucleotides of DNA out of the RuvA tetramer per ATP hydrolyzed, thus driving DNA branch migration. The RuvB motors rotate together with the DNA substrate, which together with the progressing nucleotide cycle form the mechanistic basis for DNA recombination by continuous HJ branch migration. Branch migration allows RuvC to scan DNA until it finds its consensus sequence, where it cleaves and resolves cruciform DNA. In Delftia acidovorans (strain DSM 14801 / SPH-1), this protein is Holliday junction branch migration complex subunit RuvB.